A 440-amino-acid chain; its full sequence is Ribulose bisphosphate carboxylase large chain (440 aa).

Lys4 carries the post-translational modification N6,N6,N6-trimethyllysine. Substrate is bound by residues Asn113 and Thr163. Lys165 acts as the Proton acceptor in catalysis. Residue Lys167 participates in substrate binding. Positions 191, 193, and 194 each coordinate Mg(2+). At Lys191 the chain carries N6-carboxylysine. His284 functions as the Proton acceptor in the catalytic mechanism. Substrate-binding residues include Arg285, His317, and Ser369.

This sequence belongs to the RuBisCO large chain family. Type I subfamily. Heterohexadecamer of 8 large chains and 8 small chains; disulfide-linked. The disulfide link is formed within the large subunit homodimers. It depends on Mg(2+) as a cofactor. The disulfide bond which can form in the large chain dimeric partners within the hexadecamer appears to be associated with oxidative stress and protein turnover.

The protein resides in the plastid. It localises to the chloroplast. The enzyme catalyses 2 (2R)-3-phosphoglycerate + 2 H(+) = D-ribulose 1,5-bisphosphate + CO2 + H2O. It catalyses the reaction D-ribulose 1,5-bisphosphate + O2 = 2-phosphoglycolate + (2R)-3-phosphoglycerate + 2 H(+). In terms of biological role, ruBisCO catalyzes two reactions: the carboxylation of D-ribulose 1,5-bisphosphate, the primary event in carbon dioxide fixation, as well as the oxidative fragmentation of the pentose substrate in the photorespiration process. Both reactions occur simultaneously and in competition at the same active site. The polypeptide is Ribulose bisphosphate carboxylase large chain (Matteuccia struthiopteris (European ostrich fern)).